The following is a 311-amino-acid chain: Methionyl-tRNA formyltransferase (311 aa).

112 to 115 (SLLP) serves as a coordination point for (6S)-5,6,7,8-tetrahydrofolate.

Belongs to the Fmt family.

It carries out the reaction L-methionyl-tRNA(fMet) + (6R)-10-formyltetrahydrofolate = N-formyl-L-methionyl-tRNA(fMet) + (6S)-5,6,7,8-tetrahydrofolate + H(+). In terms of biological role, attaches a formyl group to the free amino group of methionyl-tRNA(fMet). The formyl group appears to play a dual role in the initiator identity of N-formylmethionyl-tRNA by promoting its recognition by IF2 and preventing the misappropriation of this tRNA by the elongation apparatus. The polypeptide is Methionyl-tRNA formyltransferase (Bradyrhizobium sp. (strain BTAi1 / ATCC BAA-1182)).